A 277-amino-acid polypeptide reads, in one-letter code: Large ribosomal subunit protein uL2c (277 aa).

The disordered stretch occupies residues 228 to 254; sequence VDHPHGGGEGRCPVGHAQPRTPWGKPA.

This sequence belongs to the universal ribosomal protein uL2 family. In terms of assembly, part of the 50S ribosomal subunit.

The protein localises to the plastid. Its subcellular location is the chloroplast. The polypeptide is Large ribosomal subunit protein uL2c (rpl2) (Ostreococcus tauri).